We begin with the raw amino-acid sequence, 128 residues long: Phosphoribosyl-AMP cyclohydrolase (128 aa).

Position 94 (D94) interacts with Mg(2+). C95 contacts Zn(2+). Residues D96 and D98 each contribute to the Mg(2+) site. Zn(2+)-binding residues include C111 and C118.

It belongs to the PRA-CH family. In terms of assembly, homodimer. The cofactor is Mg(2+). Requires Zn(2+) as cofactor.

It is found in the cytoplasm. The catalysed reaction is 1-(5-phospho-beta-D-ribosyl)-5'-AMP + H2O = 1-(5-phospho-beta-D-ribosyl)-5-[(5-phospho-beta-D-ribosylamino)methylideneamino]imidazole-4-carboxamide. It participates in amino-acid biosynthesis; L-histidine biosynthesis; L-histidine from 5-phospho-alpha-D-ribose 1-diphosphate: step 3/9. Its function is as follows. Catalyzes the hydrolysis of the adenine ring of phosphoribosyl-AMP. This Streptomyces coelicolor (strain ATCC BAA-471 / A3(2) / M145) protein is Phosphoribosyl-AMP cyclohydrolase.